We begin with the raw amino-acid sequence, 572 residues long: uncharacterized protein (572 aa).

12 helical membrane-spanning segments follow: residues 77-97, 102-122, 145-165, 180-200, 209-229, 259-279, 297-317, 341-361, 392-412, 431-451, 478-498, and 507-527; these read MIAI…SSLS, ASII…VYAL, PAWG…TFPL, INSA…NLFG, FILS…AIII, FCSV…IGLA, VFWR…LLIS, ANIK…VVSV, LGRP…AYIN, ALAG…HIIF, IGLF…LFPI, and FFQG…YKIY.

This sequence belongs to the amino acid-polyamine-organocation (APC) superfamily.

The protein localises to the membrane. This is an uncharacterized protein from Schizosaccharomyces pombe (strain 972 / ATCC 24843) (Fission yeast).